A 148-amino-acid chain; its full sequence is Snaclec 27 (148 aa).

Positions 1–23 are cleaved as a signal peptide; sequence WGDSSSSASACWSCFSLVSGIGA. Cystine bridges form between cysteine 27-cysteine 38, cysteine 55-cysteine 144, and cysteine 121-cysteine 136. In terms of domain architecture, C-type lectin spans 34 to 145; the sequence is HEGHCYKVFS…CSSTQQFVCK (112 aa).

It belongs to the snaclec family. As to quaternary structure, heterodimer; disulfide-linked. As to expression, expressed by the venom gland.

Its subcellular location is the secreted. Functionally, interferes with one step of hemostasis (modulation of platelet aggregation, or coagulation cascade, for example). The chain is Snaclec 27 from Echis ocellatus (Ocellated saw-scaled viper).